Reading from the N-terminus, the 88-residue chain is Conotoxin Gm9.1 (88 aa).

A signal peptide spans 1–27; it reads MHLSLARSAVLMLLLLFALGNFVVVQS. The propeptide occupies 28–58; it reads GLITRDVDNGQLTDNRRNLQTEWNPLSLFMS. 3 disulfides stabilise this stretch: C62/C76, C66/C78, and C72/C83. The residue at position 87 (N87) is an Asparagine amide.

Belongs to the conotoxin P superfamily. As to expression, expressed by the venom duct.

It localises to the secreted. Its function is as follows. Neurotoxin. In vivo, elicits 'spasmodic' symptomatology. This chain is Conotoxin Gm9.1, found in Conus gloriamaris (Glory-of-the-Sea cone).